The chain runs to 407 residues: MESRVLSSGATAISGVPRLTKPAGRITTTTVAVAFPARLNATGGNVVWGRQLRPSLLNLDHSSPVSLVTKPVKRDVLKPCSATASDSAGDAAPVGFLAKYPFLVTGFFFFMWYFLNVIFNILNKKIYNYFPYPYFVSVIHLAVGVVYCLGSWTVGLPKRAPVDSNILKLLIPVGFCHALGHVTSNVSFAAVAVSFTHTIKALEPFFNAAASQFVLGQSIPISLWLSLAPVVIGVSMASLTELSFNWLGFISAMISNISFTYRSIYSKKAMTDMDSTNLYAYISIIALLFCIPPAVLFEGPQLLKHGFNDAIAKVGMIKFISDLFWVGMFYHLYNQIATNTLERVAPLTHAVGNVLKRVFVIGFSIIVFGNKISTQTAIGTSIAIAGVAIYSLIKARIEEEKRRMKSA.

A chloroplast-targeting transit peptide spans 1–81; that stretch reads MESRVLSSGA…VKRDVLKPCS (81 aa). Over 82–101 the chain is Chloroplast intermembrane; sequence ATASDSAGDAAPVGFLAKYP. Residues 102–122 traverse the membrane as a helical segment; the sequence is FLVTGFFFFMWYFLNVIFNIL. Residues 123–134 lie on the Lumenal side of the membrane; it reads NKKIYNYFPYPY. The helical transmembrane segment at 135 to 155 threads the bilayer; it reads FVSVIHLAVGVVYCLGSWTVG. At 156 to 212 the chain is on the chloroplast intermembrane side; it reads LPKRAPVDSNILKLLIPVGFCHALGHVTSNVSFAAVAVSFTHTIKALEPFFNAAASQ. Residues 213 to 233 traverse the membrane as a helical segment; it reads FVLGQSIPISLWLSLAPVVIG. Residues 234-277 lie on the Lumenal side of the membrane; it reads VSMASLTELSFNWLGFISAMISNISFTYRSIYSKKAMTDMDSTN. Residues 278–297 traverse the membrane as a helical segment; it reads LYAYISIIALLFCIPPAVLF. The Chloroplast intermembrane portion of the chain corresponds to 298 to 375; that stretch reads EGPQLLKHGF…IVFGNKISTQ (78 aa). The helical transmembrane segment at 376–396 threads the bilayer; the sequence is TAIGTSIAIAGVAIYSLIKAR. Topologically, residues 397–407 are lumenal; it reads IEEEKRRMKSA.

This sequence belongs to the TPT transporter family. TPT (TC 2.A.7.9) subfamily. Homodimer.

The protein resides in the plastid. It localises to the chloroplast membrane. Its function is as follows. Mediates the export of fixed carbons from the chloroplasts into the cytosol in the form of triose phosphates. In addition, it can also bind and transport phosphoenolpyruvate, thereby increasing the photosynthetic efficiency of C4-plants. This chain is Triose phosphate/phosphate translocator, chloroplastic (TPT), found in Flaveria trinervia (Clustered yellowtops).